Reading from the N-terminus, the 336-residue chain is Ornithine carbamoyltransferase, catabolic (336 aa).

Carbamoyl phosphate contacts are provided by residues 62–65 (STRT), glutamine 89, arginine 113, and 140–143 (HPTQ). Residues asparagine 172, aspartate 236, and 240–241 (SM) contribute to the L-ornithine site. Residues 277–278 (CL) and arginine 322 contribute to the carbamoyl phosphate site.

It belongs to the aspartate/ornithine carbamoyltransferase superfamily. OTCase family.

The protein localises to the cytoplasm. The enzyme catalyses carbamoyl phosphate + L-ornithine = L-citrulline + phosphate + H(+). The protein operates within amino-acid degradation; L-arginine degradation via ADI pathway; carbamoyl phosphate from L-arginine: step 2/2. In terms of biological role, reversibly catalyzes the transfer of the carbamoyl group from carbamoyl phosphate (CP) to the N(epsilon) atom of ornithine (ORN) to produce L-citrulline. In Staphylococcus aureus (strain MSSA476), this protein is Ornithine carbamoyltransferase, catabolic.